The chain runs to 196 residues: Probable GTP-binding protein EngB (196 aa).

Positions 21-195 (DVSEICLIGR…YELIDKLLGS (175 aa)) constitute an EngB-type G domain. GTP contacts are provided by residues 29 to 36 (GRSNVGKS), 56 to 60 (GKTRL), 75 to 78 (DAPG), 142 to 145 (TKLD), and 174 to 176 (ISN). S36 and T58 together coordinate Mg(2+).

Belongs to the TRAFAC class TrmE-Era-EngA-EngB-Septin-like GTPase superfamily. EngB GTPase family. Requires Mg(2+) as cofactor.

Its function is as follows. Necessary for normal cell division and for the maintenance of normal septation. The protein is Probable GTP-binding protein EngB of Mycoplasma mycoides subsp. mycoides SC (strain CCUG 32753 / NCTC 10114 / PG1).